Consider the following 291-residue polypeptide: Ribosomal protein L11 methyltransferase (291 aa).

S-adenosyl-L-methionine-binding residues include Thr136, Gly159, Asp181, and Asn228.

It belongs to the methyltransferase superfamily. PrmA family.

The protein resides in the cytoplasm. The enzyme catalyses L-lysyl-[protein] + 3 S-adenosyl-L-methionine = N(6),N(6),N(6)-trimethyl-L-lysyl-[protein] + 3 S-adenosyl-L-homocysteine + 3 H(+). Functionally, methylates ribosomal protein L11. This chain is Ribosomal protein L11 methyltransferase, found in Sinorhizobium fredii (strain NBRC 101917 / NGR234).